The following is a 125-amino-acid chain: Acidic phospholipase A2 6 (125 aa).

A signal peptide is located at residue S1. Residues 2 to 7 constitute a propeptide that is removed on maturation; that stretch reads NRPMPL. 7 cysteine pairs are disulfide-bonded: C18-C77, C33-C124, C35-C50, C49-C105, C56-C98, C66-C91, and C84-C96. Position 30 (D30) interacts with Zn(2+). The Ca(2+) site is built by Y34 and G36. H53 is an active-site residue. D54 provides a ligand contact to Ca(2+). Residue D99 is part of the active site.

Heterodimer formed between isoform 5 and isoform 6 in presence of zinc ion and monomer in absence of zinc ion. It depends on Ca(2+) as a cofactor. In terms of tissue distribution, expressed by the venom gland.

The protein localises to the secreted. The catalysed reaction is a 1,2-diacyl-sn-glycero-3-phosphocholine + H2O = a 1-acyl-sn-glycero-3-phosphocholine + a fatty acid + H(+). Its function is as follows. PLA2 catalyzes the calcium-dependent hydrolysis of the 2-acyl groups in 3-sn-phosphoglycerides. This Naja sagittifera (Andaman cobra) protein is Acidic phospholipase A2 6.